Here is a 172-residue protein sequence, read N- to C-terminus: MKQQLLLLEDVEGLGRSGDIVTARPGYVRNYLLPKQKAVIAGAGTLRLQAKLKEERLLRAAADREESEKLAQILKDIVLEFQVRVDPDNNMYGSVTVSDIIAEAAKKNIVLTRKNFPHAHYAIKNLGKKSVPLKLKEDVTATLIVEVSSESSYVAVLNPQPSQEQTAAEELN.

This sequence belongs to the bacterial ribosomal protein bL9 family.

Its function is as follows. Binds to the 23S rRNA. This Chlamydia abortus (strain DSM 27085 / S26/3) (Chlamydophila abortus) protein is Large ribosomal subunit protein bL9.